A 78-amino-acid polypeptide reads, in one-letter code: DNA-directed RNA polymerase subunit omega (78 aa).

This sequence belongs to the RNA polymerase subunit omega family. In terms of assembly, in cyanobacteria the RNAP catalytic core is composed of 2 alpha, 1 beta, 1 beta', 1 gamma and 1 omega subunit. When a sigma factor is associated with the core the holoenzyme is formed, which can initiate transcription.

It carries out the reaction RNA(n) + a ribonucleoside 5'-triphosphate = RNA(n+1) + diphosphate. Its function is as follows. Promotes RNA polymerase assembly. Latches the N- and C-terminal regions of the beta' subunit thereby facilitating its interaction with the beta and alpha subunits. The chain is DNA-directed RNA polymerase subunit omega from Nostoc punctiforme (strain ATCC 29133 / PCC 73102).